Here is a 749-residue protein sequence, read N- to C-terminus: Disintegrin and metalloproteinase domain-containing protein 10 (749 aa).

The N-terminal stretch at 1–19 (MVLPTVLILLLSWAAGLGG) is a signal peptide. A propeptide spanning residues 20–214 (QYGNPLNKYI…SGPELLRKKR (195 aa)) is cleaved from the precursor. Over 20–673 (QYGNPLNKYI…SPQLYENIAE (654 aa)) the chain is Extracellular. The Cysteine switch motif lies at 171–178 (GGCADHSV). Residue C173 coordinates Zn(2+). Positions 221–457 (NTCQLYIQTD…KRNNCFVESG (237 aa)) constitute a Peptidase M12B domain. Disulfide bonds link C223–C314, C345–C452, C400–C436, C461–C496, C472–C485, C474–C480, C484–C516, C504–C512, C511–C537, C525–C544, C531–C563, C556–C568, C573–C599, C581–C608, C583–C598, C595–C640, and C633–C646. N-linked (GlcNAc...) asparagine glycans are attached at residues N268 and N279. H384 contacts Zn(2+). E385 is a catalytic residue. The Zn(2+) site is built by H388 and H394. Residue N440 is glycosylated (N-linked (GlcNAc...) asparagine). The Disintegrin domain occupies 458 to 552 (QPICGNGMVE…LCPASDPKPN (95 aa)). N552 is a glycosylation site (N-linked (GlcNAc...) asparagine). Residues 674 to 694 (WIVAHWWAVLLMGIALIMLMA) form a helical membrane-spanning segment. At 695 to 749 (GFIKICSVHTPSSNPKLPPPKPLPGTLKRRRPPQPIQQPPRQRPRESYQMGHMRR) the chain is on the cytoplasmic side. The interval 705–749 (PSSNPKLPPPKPLPGTLKRRRPPQPIQQPPRQRPRESYQMGHMRR) is disordered. Positions 709–716 (PKLPPPKP) match the SH3-binding motif. A Phosphothreonine modification is found at T720. An SH3-binding motif is present at residues 723–729 (RRRPPQP). The interaction with AP2A1, AP2A2 and AP2M1 stretch occupies residues 735–749 (RQRPRESYQMGHMRR).

As to quaternary structure, forms a ternary EFNA5-EPHA3-ADAM10 complex mediating EFNA5 extracellular domain shedding by ADAM10 which regulates the EFNA5-EPHA3 complex internalization and function, the cleavage occurs in trans, with ADAM10 and its substrate being on the membranes of opposing cells. Interacts with the clathrin adapter AP2 complex subunits AP2A1, AP2A2, AP2B1, and AP2M1; this interaction facilitates ADAM10 endocytosis from the plasma membrane during long-term potentiation in hippocampal neurons. Forms a ternary complex composed of ADAM10, EPHA4 and CADH1; within the complex, ADAM10 cleaves CADH1 which disrupts adherens junctions. Interacts with EPHA2. Interacts with NGF in a divalent cation-dependent manner. Interacts with TSPAN14; the interaction promotes ADAM10 maturation and cell surface expression. Interacts with TSPAN5, TSPAN10, TSPAN14, TSPAN15, TSPAN17 and TSPAN33; these interactions regulate ADAM10 substrate specificity, endocytosis and turnover. Interacts (via extracellular domain) with TSPAN33 (via extracellular domain) and (via cytoplasmic domain) with AFDN; interaction with TSPAN33 allows the docking of ADAM10 to zonula adherens through a PDZ11-dependent interaction between TSPAN33 and PLEKHA7 while interaction with AFDN locks ADAM10 at zonula adherens. Interacts with DLG1; this interaction recruits ADAM10 to the cell membrane during long-term depression in hippocampal neurons. Interacts (via extracellular domain) with BACE1 (via extracellular domain). Interacts with FAM171A1. Zn(2+) serves as cofactor. The precursor is cleaved by furin and PCSK7. Expressed in the brain, specifically in neurons and astrocytes (at protein level). Expressed in inner and outer pillar cells of the organ of Corti (at protein level). Expressed in kidney and lung.

The protein resides in the cell membrane. Its subcellular location is the golgi apparatus membrane. The protein localises to the cytoplasmic vesicle. It is found in the clathrin-coated vesicle. It localises to the cell projection. The protein resides in the axon. Its subcellular location is the dendrite. The protein localises to the cell junction. It is found in the adherens junction. It localises to the cytoplasm. The enzyme catalyses Endopeptidase of broad specificity.. Catalytically inactive when the propeptide is intact and associated with the mature enzyme. The disintegrin and cysteine-rich regions modulate access of substrates to exerts an inhibitory effect on the cleavage of ADAM10 substrates. Functionally, transmembrane metalloprotease which mediates the ectodomain shedding of a myriad of transmembrane proteins, including adhesion proteins, growth factor precursors and cytokines being essential for development and tissue homeostasis. Associates with six members of the tetraspanin superfamily TspanC8 which regulate its exit from the endoplasmic reticulum and its substrate selectivity. Cleaves the membrane-bound precursor of TNF-alpha to its mature soluble form. Responsible for the proteolytical release of soluble JAM3 from endothelial cells surface. Responsible for the proteolytic release of several other cell-surface proteins, including heparin-binding epidermal growth-like factor, ephrin-A2, CD44, CDH2 and for constitutive and regulated alpha-secretase cleavage of amyloid precursor protein (APP) at '687-Lys-|-Leu-688'. Contributes to the normal cleavage of the cellular prion protein. Involved in the cleavage of the adhesion molecule L1 at the cell surface and in released membrane vesicles, suggesting a vesicle-based protease activity. Also controls the proteolytic processing of Notch and mediates lateral inhibition during neurogenesis. Required for the development of type 1 transitional B cells into marginal zone B cells, probably by cleaving Notch. Responsible for the FasL ectodomain shedding and for the generation of the remnant ADAM10-processed FasL (FasL APL) transmembrane form. Also cleaves the ectodomain of the integral membrane proteins CORIN and ITM2B. Mediates the proteolytic cleavage of LAG3, leading to release the secreted form of LAG3. Mediates the proteolytic cleavage of IL6R and IL11RA, leading to the release of secreted forms of IL6R and IL11RA. Enhances the cleavage of CHL1 by BACE1. Cleaves NRCAM. Cleaves TREM2, resulting in shedding of the TREM2 ectodomain. Involved in the development and maturation of glomerular and coronary vasculature. During development of the cochlear organ of Corti, promotes pillar cell separation by forming a ternary complex with CADH1 and EPHA4 and cleaving CADH1 at adherens junctions. May regulate the EFNA5-EPHA3 signaling. This Mus musculus (Mouse) protein is Disintegrin and metalloproteinase domain-containing protein 10 (Adam10).